Reading from the N-terminus, the 106-residue chain is Flagellar transcriptional regulator FlhD (106 aa).

It belongs to the FlhD family. Homodimer; disulfide-linked. Forms a heterohexamer composed of two FlhC and four FlhD subunits. Each FlhC binds a FlhD dimer, forming a heterotrimer, and a hexamer assembles by dimerization of two heterotrimers.

It is found in the cytoplasm. Functions in complex with FlhC as a master transcriptional regulator that regulates transcription of several flagellar and non-flagellar operons by binding to their promoter region. Activates expression of class 2 flagellar genes, including fliA, which is a flagellum-specific sigma factor that turns on the class 3 genes. Also regulates genes whose products function in a variety of physiological pathways. This Burkholderia mallei (strain SAVP1) protein is Flagellar transcriptional regulator FlhD.